The following is a 394-amino-acid chain: Elongation factor Tu (394 aa).

The tr-type G domain occupies 10 to 204 (KPHINVGTIG…ALDNYIPEPK (195 aa)). Residues 19-26 (GHVDHGKT) are G1. 19 to 26 (GHVDHGKT) lines the GTP pocket. Residue threonine 26 participates in Mg(2+) binding. Residues 60–64 (GITIN) form a G2 region. The G3 stretch occupies residues 81–84 (DCPG). GTP is bound by residues 81 to 85 (DCPGH) and 136 to 139 (NKCD). Positions 136–139 (NKCD) are G4. Residues 174-176 (SAL) form a G5 region.

It belongs to the TRAFAC class translation factor GTPase superfamily. Classic translation factor GTPase family. EF-Tu/EF-1A subfamily. Monomer.

It localises to the cytoplasm. The catalysed reaction is GTP + H2O = GDP + phosphate + H(+). GTP hydrolase that promotes the GTP-dependent binding of aminoacyl-tRNA to the A-site of ribosomes during protein biosynthesis. The chain is Elongation factor Tu from Blochmanniella pennsylvanica (strain BPEN).